A 249-amino-acid polypeptide reads, in one-letter code: Probable transcriptional regulatory protein Sare_1779 (249 aa).

It belongs to the TACO1 family.

It is found in the cytoplasm. The chain is Probable transcriptional regulatory protein Sare_1779 from Salinispora arenicola (strain CNS-205).